A 55-amino-acid polypeptide reads, in one-letter code: Potassium channel toxin alpha-KTX 12 Sp2 (55 aa).

The N-terminal stretch at 1–18 (MRLAIILLLMTTIVLTIG) is a signal peptide. 3 disulfides stabilise this stretch: Cys26–Cys46, Cys32–Cys51, and Cys36–Cys53.

It belongs to the short scorpion toxin superfamily. Potassium channel inhibitor family. Alpha-KTx 12 subfamily. In terms of tissue distribution, expressed by the venom gland.

It is found in the secreted. Blocks mouse voltage-gated potassium channels Kv1.3/KCNA3 (IC(50)=0.3-30 nM), when the channel is expressed in Jurkat T cells or in HEK293 cells. Also shows a weaker inhibition on mKv1.2/KCNA2 (IC(50)=56.9 nM) and mKv1.1/KCNA1 (IC(50)=485 nM). Probably through the inhibition of both Kv1.2/KCNA2 and Kv1.3/KCNA3, the toxin also reduces the free calcium concentration in Jurkat T cells, inhibits the activation of Jurkat T cells and reduces the release of inflammatory cytokines interleukin-2, showing a strong immunosuppressant effect. In Scorpiops pococki (Scorpion), this protein is Potassium channel toxin alpha-KTX 12 Sp2.